A 253-amino-acid polypeptide reads, in one-letter code: MAGHSKWANIKRQKARVDAVKGKVFAKVSRQIIVAARSGADPAGNFQLRTAIEKAKTVGIPNDNIERAIAKGSGQLNDGSQLEEIRYEGYGAGGIAIIIEALTDNRNRTAADLRSAFTKNGGNLGETGCVSWMFDQKGVVSITGSYDEDELLEASVEGEAEYYEVIAEDDFQGVEVFTETTNLENLSQVLQEKGFDISEVEFRWVSAHTIEVSDPEQARSLLKLMDALDDLDDVQNITANFDIANKLLKTLAS.

The protein belongs to the TACO1 family.

Its subcellular location is the cytoplasm. The protein is Probable transcriptional regulatory protein Tery_2125 of Trichodesmium erythraeum (strain IMS101).